A 163-amino-acid polypeptide reads, in one-letter code: Neurotrophin-3 (163 aa).

The first 3 residues, 1 to 3 (IQS), serve as a signal peptide directing secretion. Positions 4-119 (TSMDQGILTE…VLNRTSRRKR (116 aa)) are excised as a propeptide. Asn112 carries N-linked (GlcNAc...) asparagine glycosylation. The tract at residues 114–133 (TSRRKREGKSHRGEYSVCDS) is disordered. A compositionally biased stretch (basic and acidic residues) spans 123–133 (SHRGEYSVCDS).

Belongs to the NGF-beta family.

It localises to the secreted. Seems to promote the survival of visceral and proprioceptive sensory neurons. This is Neurotrophin-3 (NTF3) from Lichanura trivirgata (Rosy boa).